We begin with the raw amino-acid sequence, 53 residues long: UPF0391 membrane protein ECA0470 (53 aa).

Helical transmembrane passes span 4–24 (WGIIFLVIALIAAALGFGGLA) and 30–47 (AAKIVFVVGIILFLVSLF).

It belongs to the UPF0391 family.

It is found in the cell membrane. The protein is UPF0391 membrane protein ECA0470 of Pectobacterium atrosepticum (strain SCRI 1043 / ATCC BAA-672) (Erwinia carotovora subsp. atroseptica).